A 494-amino-acid chain; its full sequence is Alpha-amylase-related protein (494 aa).

Positions 1-20 (MIKFALALTLCLAGASLSLA) are cleaved as a signal peptide. Position 21 is a pyrrolidone carboxylic acid (Q21). Cysteines 48 and 104 form a disulfide. Ca(2+) contacts are provided by N118, Q169, and D178. An intrachain disulfide couples C157 to C171. R206 contacts chloride. The Nucleophile role is filled by D208. Residue H212 coordinates Ca(2+). The Proton donor role is filled by E245. Chloride contacts are provided by N308 and R343. 3 disulfides stabilise this stretch: C376-C382, C418-C441, and C448-C460.

This sequence belongs to the glycosyl hydrolase 13 family. Monomer. The cofactor is Ca(2+). Requires chloride as cofactor.

It is found in the secreted. It carries out the reaction Endohydrolysis of (1-&gt;4)-alpha-D-glucosidic linkages in polysaccharides containing three or more (1-&gt;4)-alpha-linked D-glucose units.. This Drosophila bakoue (Fruit fly) protein is Alpha-amylase-related protein (Amyrel).